The chain runs to 745 residues: Protein transport protein SEC23 D (745 aa).

Positions 53, 56, 73, and 76 each coordinate Zn(2+). Residues 53 to 76 are zinc finger-like; it reads CENCYAYFNTYCELDQWAWNCSLC.

Belongs to the SEC23/SEC24 family. SEC24 subfamily. In terms of assembly, component of the coat protein complex II (COPII), composed of at least five proteins: the Sec23/24 complex, the Sec13/31 complex and Sar1. Mostly expressed in closed floral bud, pollen and flowers, and, to a lower extent, in mature siliques, roots and leaf primordia.

It localises to the cytoplasmic vesicle. It is found in the COPII-coated vesicle membrane. The protein localises to the endoplasmic reticulum membrane. The protein resides in the membrane. Functionally, component of the coat protein complex II (COPII) which promotes the formation of transport vesicles from the endoplasmic reticulum (ER). The coat has two main functions, the physical deformation of the endoplasmic reticulum membrane into vesicles and the selection of cargo molecules. May contribute to COPII-coated vesicles formation and ER-Golgi vesicle transport. Together with SEC23A, essential for pollen wall development and exine patterning, probably by regulating endoplasmic reticulum (ER) export of lipids and proteins (e.g. sporopollenin) necessary for pollen wall formation. Also involved in plastid physiology in anther tapetal cells. The polypeptide is Protein transport protein SEC23 D (Arabidopsis thaliana (Mouse-ear cress)).